Reading from the N-terminus, the 184-residue chain is Large ribosomal subunit protein uL6 (184 aa).

This sequence belongs to the universal ribosomal protein uL6 family. In terms of assembly, part of the 50S ribosomal subunit.

In terms of biological role, this protein binds to the 23S rRNA, and is important in its secondary structure. It is located near the subunit interface in the base of the L7/L12 stalk, and near the tRNA binding site of the peptidyltransferase center. In Methanosphaera stadtmanae (strain ATCC 43021 / DSM 3091 / JCM 11832 / MCB-3), this protein is Large ribosomal subunit protein uL6.